The sequence spans 248 residues: Small ribosomal subunit protein uS3 (248 aa).

A KH type-2 domain is found at 38–106; the sequence is IREFLSKGLD…QVALNILEVK (69 aa). Residues 214-230 show a composition bias toward basic and acidic residues; the sequence is SEINAPAERRGRGDRNA. A disordered region spans residues 214–248; it reads SEINAPAERRGRGDRNARPRRGGQRRQRAEQKQEG.

It belongs to the universal ribosomal protein uS3 family. As to quaternary structure, part of the 30S ribosomal subunit. Forms a tight complex with proteins S10 and S14.

Functionally, binds the lower part of the 30S subunit head. Binds mRNA in the 70S ribosome, positioning it for translation. The polypeptide is Small ribosomal subunit protein uS3 (Corynebacterium glutamicum (strain R)).